The primary structure comprises 267 residues: Formamidopyrimidine-DNA glycosylase (267 aa).

Proline 2 functions as the Schiff-base intermediate with DNA in the catalytic mechanism. Glutamate 3 acts as the Proton donor in catalysis. The active-site Proton donor; for beta-elimination activity is the lysine 58. Residues histidine 91, arginine 110, and arginine 152 each coordinate DNA. The segment at 233-267 adopts an FPG-type zinc-finger fold; sequence DVYGRGTDACTRCGGALEEIRLGNRSTVFCPRCQT. Arginine 257 (proton donor; for delta-elimination activity) is an active-site residue.

Belongs to the FPG family. As to quaternary structure, monomer. It depends on Zn(2+) as a cofactor.

The enzyme catalyses Hydrolysis of DNA containing ring-opened 7-methylguanine residues, releasing 2,6-diamino-4-hydroxy-5-(N-methyl)formamidopyrimidine.. It carries out the reaction 2'-deoxyribonucleotide-(2'-deoxyribose 5'-phosphate)-2'-deoxyribonucleotide-DNA = a 3'-end 2'-deoxyribonucleotide-(2,3-dehydro-2,3-deoxyribose 5'-phosphate)-DNA + a 5'-end 5'-phospho-2'-deoxyribonucleoside-DNA + H(+). In terms of biological role, involved in base excision repair of DNA damaged by oxidation or by mutagenic agents. Acts as a DNA glycosylase that recognizes and removes damaged bases. Has a preference for oxidized purines, such as 7,8-dihydro-8-oxoguanine (8-oxoG). Has AP (apurinic/apyrimidinic) lyase activity and introduces nicks in the DNA strand. Cleaves the DNA backbone by beta-delta elimination to generate a single-strand break at the site of the removed base with both 3'- and 5'-phosphates. The sequence is that of Formamidopyrimidine-DNA glycosylase from Geobacter metallireducens (strain ATCC 53774 / DSM 7210 / GS-15).